A 300-amino-acid chain; its full sequence is 2-dehydropantoate 2-reductase (300 aa).

Residues 7–12 (GAGAIG), K74, N99, and A123 each bind NADP(+). K179 acts as the Proton donor in catalysis. Substrate is bound by residues K179, N183, N187, N197, and 246 to 249 (NYNS). E261 provides a ligand contact to NADP(+).

This sequence belongs to the ketopantoate reductase family.

Its subcellular location is the cytoplasm. It catalyses the reaction (R)-pantoate + NAD(+) = 2-dehydropantoate + NADH + H(+). The catalysed reaction is (R)-pantoate + NADP(+) = 2-dehydropantoate + NADPH + H(+). The protein operates within cofactor biosynthesis; coenzyme A biosynthesis. Its function is as follows. Catalyzes the NAD(P)H-dependent reduction of ketopantoate into pantoic acid. The chain is 2-dehydropantoate 2-reductase (apbA) from Pyrococcus abyssi (strain GE5 / Orsay).